The chain runs to 394 residues: 1-deoxy-D-xylulose 5-phosphate reductoisomerase (394 aa).

The NADPH site is built by T28, G29, S30, I31, N57, and N133. K134 lines the 1-deoxy-D-xylulose 5-phosphate pocket. E135 provides a ligand contact to NADPH. Residue D157 coordinates Mn(2+). Positions 158, 159, 183, and 206 each coordinate 1-deoxy-D-xylulose 5-phosphate. E159 is a binding site for Mn(2+). G212 serves as a coordination point for NADPH. The 1-deoxy-D-xylulose 5-phosphate site is built by S219, N224, K225, and E228. E228 contributes to the Mn(2+) binding site.

The protein belongs to the DXR family. Mg(2+) serves as cofactor. Mn(2+) is required as a cofactor.

The catalysed reaction is 2-C-methyl-D-erythritol 4-phosphate + NADP(+) = 1-deoxy-D-xylulose 5-phosphate + NADPH + H(+). It participates in isoprenoid biosynthesis; isopentenyl diphosphate biosynthesis via DXP pathway; isopentenyl diphosphate from 1-deoxy-D-xylulose 5-phosphate: step 1/6. Its function is as follows. Catalyzes the NADPH-dependent rearrangement and reduction of 1-deoxy-D-xylulose-5-phosphate (DXP) to 2-C-methyl-D-erythritol 4-phosphate (MEP). The chain is 1-deoxy-D-xylulose 5-phosphate reductoisomerase from Nocardia farcinica (strain IFM 10152).